The chain runs to 151 residues: Large ribosomal subunit protein uL13 (151 aa).

A disordered region spans residues 126 to 151 (YPGPNHPHQAQKPEELTLNTIPNGDK). Polar residues predominate over residues 142–151 (TLNTIPNGDK).

The protein belongs to the universal ribosomal protein uL13 family. Part of the 50S ribosomal subunit.

This protein is one of the early assembly proteins of the 50S ribosomal subunit, although it is not seen to bind rRNA by itself. It is important during the early stages of 50S assembly. The sequence is that of Large ribosomal subunit protein uL13 from Crocosphaera subtropica (strain ATCC 51142 / BH68) (Cyanothece sp. (strain ATCC 51142)).